The sequence spans 383 residues: Probable cell wall hydrolase LytN (383 aa).

An N-terminal signal peptide occupies residues 1–49 (MFVYYCKECFIMNKQQSKVRYSIRKVSIGILSISIGMFLALGMSNKAYA). The region spanning 175-219 (QIYTVKKGDTLSAIALKYKTTVSNIQNTNNIANPNLIFIGQKLKV) is the LysM domain. The Peptidase C51 domain maps to 241–378 (NSSTLNYLKT…NYENDMIFIR (138 aa)).

The protein resides in the secreted. Probably involved in peptidoglycan hydrolysis. This Staphylococcus aureus (strain MSSA476) protein is Probable cell wall hydrolase LytN (lytN).